Here is a 301-residue protein sequence, read N- to C-terminus: Quinolinate synthase (301 aa).

Residues His21 and Ser38 each coordinate iminosuccinate. Cys83 is a [4Fe-4S] cluster binding site. Iminosuccinate contacts are provided by residues 109 to 111 and Ser126; that span reads YIN. Position 169 (Cys169) interacts with [4Fe-4S] cluster. Residues 195–197 and Thr212 contribute to the iminosuccinate site; that span reads HPE. Cys257 contributes to the [4Fe-4S] cluster binding site.

It belongs to the quinolinate synthase family. Type 2 subfamily. It depends on [4Fe-4S] cluster as a cofactor.

Its subcellular location is the cytoplasm. The catalysed reaction is iminosuccinate + dihydroxyacetone phosphate = quinolinate + phosphate + 2 H2O + H(+). It functions in the pathway cofactor biosynthesis; NAD(+) biosynthesis; quinolinate from iminoaspartate: step 1/1. Functionally, catalyzes the condensation of iminoaspartate with dihydroxyacetone phosphate to form quinolinate. This chain is Quinolinate synthase, found in Clostridium perfringens (strain ATCC 13124 / DSM 756 / JCM 1290 / NCIMB 6125 / NCTC 8237 / Type A).